Consider the following 213-residue polypeptide: NADH-quinone oxidoreductase subunit C (213 aa).

The protein belongs to the complex I 30 kDa subunit family. NDH-1 is composed of 14 different subunits. Subunits NuoB, C, D, E, F, and G constitute the peripheral sector of the complex.

The protein localises to the cell inner membrane. The catalysed reaction is a quinone + NADH + 5 H(+)(in) = a quinol + NAD(+) + 4 H(+)(out). Its function is as follows. NDH-1 shuttles electrons from NADH, via FMN and iron-sulfur (Fe-S) centers, to quinones in the respiratory chain. The immediate electron acceptor for the enzyme in this species is believed to be ubiquinone. Couples the redox reaction to proton translocation (for every two electrons transferred, four hydrogen ions are translocated across the cytoplasmic membrane), and thus conserves the redox energy in a proton gradient. This chain is NADH-quinone oxidoreductase subunit C, found in Rhodospirillum rubrum (strain ATCC 11170 / ATH 1.1.1 / DSM 467 / LMG 4362 / NCIMB 8255 / S1).